Reading from the N-terminus, the 205-residue chain is Probable nicotinate-nucleotide adenylyltransferase (205 aa).

This sequence belongs to the NadD family.

It carries out the reaction nicotinate beta-D-ribonucleotide + ATP + H(+) = deamido-NAD(+) + diphosphate. It participates in cofactor biosynthesis; NAD(+) biosynthesis; deamido-NAD(+) from nicotinate D-ribonucleotide: step 1/1. Functionally, catalyzes the reversible adenylation of nicotinate mononucleotide (NaMN) to nicotinic acid adenine dinucleotide (NaAD). This Arthrobacter sp. (strain FB24) protein is Probable nicotinate-nucleotide adenylyltransferase.